Consider the following 232-residue polypeptide: Enolase-phosphatase E1 (232 aa).

Belongs to the HAD-like hydrolase superfamily. MasA/MtnC family. In terms of assembly, monomer. Mg(2+) serves as cofactor.

It carries out the reaction 5-methylsulfanyl-2,3-dioxopentyl phosphate + H2O = 1,2-dihydroxy-5-(methylsulfanyl)pent-1-en-3-one + phosphate. The protein operates within amino-acid biosynthesis; L-methionine biosynthesis via salvage pathway; L-methionine from S-methyl-5-thio-alpha-D-ribose 1-phosphate: step 3/6. Its pathway is amino-acid biosynthesis; L-methionine biosynthesis via salvage pathway; L-methionine from S-methyl-5-thio-alpha-D-ribose 1-phosphate: step 4/6. Bifunctional enzyme that catalyzes the enolization of 2,3-diketo-5-methylthiopentyl-1-phosphate (DK-MTP-1-P) into the intermediate 2-hydroxy-3-keto-5-methylthiopentenyl-1-phosphate (HK-MTPenyl-1-P), which is then dephosphorylated to form the acireductone 1,2-dihydroxy-3-keto-5-methylthiopentene (DHK-MTPene). This chain is Enolase-phosphatase E1, found in Xanthomonas euvesicatoria pv. vesicatoria (strain 85-10) (Xanthomonas campestris pv. vesicatoria).